Here is a 222-residue protein sequence, read N- to C-terminus: Interleukin-12 subunit alpha (222 aa).

The first 25 residues, Met1–Ala25, serve as a signal peptide directing secretion. Disulfide bonds link Cys40–Cys113, Cys67–Cys199, and Cys88–Cys126. Residues Asn42, Asn96, Asn110, and Asn183 are each glycosylated (N-linked (GlcNAc...) asparagine).

This sequence belongs to the IL-6 superfamily. As to quaternary structure, heterodimer with IL12B; disulfide-linked. This heterodimer is known as interleukin IL-12. Heterodimer with EBI3/IL27B; not disulfide-linked. This heterodimer is known as interleukin IL-35. Interacts with NBR1; this interaction promotes IL-12 secretion.

It localises to the secreted. In terms of biological role, heterodimerizes with IL12B to form the IL-12 cytokine or with EBI3/IL27B to form the IL-35 cytokine. IL-12 is primarily produced by professional antigen-presenting cells (APCs) such as B-cells and dendritic cells (DCs) as well as macrophages and granulocytes and regulates T-cell and natural killer-cell responses, induces the production of interferon-gamma (IFN-gamma), favors the differentiation of T-helper 1 (Th1) cells and is an important link between innate resistance and adaptive immunity. Mechanistically, exerts its biological effects through a receptor composed of IL12R1 and IL12R2 subunits. Binding to the receptor results in the rapid tyrosine phosphorylation of a number of cellular substrates including the JAK family kinases TYK2 and JAK2. In turn, recruited STAT4 gets phosphorylated and translocates to the nucleus where it regulates cytokine/growth factor responsive genes. As part of IL-35, plays essential roles in maintaining the immune homeostasis of the liver microenvironment and also functions as an immune-suppressive cytokine. Mediates biological events through unconventional receptors composed of IL12RB2 and gp130/IL6ST heterodimers or homodimers. Signaling requires the transcription factors STAT1 and STAT4, which form a unique heterodimer that binds to distinct DNA sites. The polypeptide is Interleukin-12 subunit alpha (IL12A) (Felis catus (Cat)).